A 349-amino-acid chain; its full sequence is Cyclic AMP-dependent transcription factor ATF-4 (349 aa).

3 disordered regions span residues 49–75, 204–271, and 279–298; these read FSSDKAGSSEWPAMDDGLASASDTGKE, PPCV…TAKV, and KLKKMEQNKTAATRYRQKKR. At Pro60 the chain carries 4-hydroxyproline. Thr212 carries the post-translational modification Phosphothreonine. Ser214, Ser218, Ser223, Ser230, and Ser234 each carry phosphoserine. The short motif at 214–223 is the BetaTrCP degron motif element; the sequence is SDNDSGICMS. A compositionally biased stretch (polar residues) spans 229-239; sequence GSPQHSPSTSR. The residue at position 235 (Pro235) is a 4-hydroxyproline. The residue at position 247 (Ser247) is a Phosphoserine. Ser251 carries the post-translational modification Phosphoserine; by RPS6KA3. Residues Lys258 and Lys270 each participate in a glycyl lysine isopeptide (Lys-Gly) (interchain with G-Cter in SUMO2) cross-link. One can recognise a bZIP domain in the interval 276–339; that stretch reads LDKKLKKMEQ…QYLKDLIEEV (64 aa). A basic motif region spans residues 278 to 298; the sequence is KKLKKMEQNKTAATRYRQKKR. Residues 303–339 form an interaction with GABBR1 region; that stretch reads ALTGECKELEKKNEALKEKADSLAKEIQYLKDLIEEV. The tract at residues 304–332 is leucine-zipper; it reads LTGECKELEKKNEALKEKADSLAKEIQYL. At Lys309 the chain carries N6-acetyllysine.

Belongs to the bZIP family. In terms of assembly, binds DNA as a homodimer and as a heterodimer. Heterodimer; heterodimerizes with CEBPB. Heterodimer; heterodimerizes with DDIT3/CHOP. Interacts with CEP290 (via an N-terminal region). Interacts with NEK6, DAPK2 (isoform 2) and ZIPK/DAPK3. Interacts (via its leucine zipper domain) with GABBR1 and GABBR2 (via their C-termini). Forms a heterodimer with TXLNG in osteoblasts. Interacts (via its DNA binding domain) with FOXO1 (C-terminal half); the interaction occurs in osteoblasts and regulates glucose homeostasis through suppression of beta-cell proliferation and a decrease in insulin production. Interacts with SATB2; the interaction results in enhanced DNA binding and transactivation by these transcription factors. Interacts with ABRAXAS2. Interacts with TRIB3, inhibiting the transactivation activity of ATF4. Interacts with DISC1; which inhibits ATF4 transcription factor activity by disrupting ATF4 dimerization and DNA-binding. Interacts with EP300/p300; EP300/p300 stabilizes ATF4 and increases its transcriptional activity independently of its catalytic activity by preventing its ubiquitination. Ubiquitinated by SCF(BTRC) in response to mTORC1 signal, followed by proteasomal degradation and leading to down-regulate expression of SIRT4. Interaction with EP300/p300 inhibits ubiquitination by SCF(BTRC). In terms of processing, phosphorylation at Ser-251 by RPS6KA3/RSK2 in osteoblasts enhances transactivation activity and promotes osteoblast differentiation. Phosphorylated on the betaTrCP degron motif at Ser-218, followed by phosphorylation at Thr-212, Ser-223, Ser-230, Ser-234 and Ser-247, promoting interaction with BTRC and ubiquitination. Phosphorylation is promoted by mTORC1. Phosphorylation at Ser-214 by CK2 decreases its stability. Phosphorylated by NEK6. Post-translationally, hydroxylated by PHD3, leading to decreased protein stability. In terms of tissue distribution, ubiquitously expressed in adults.

The protein localises to the nucleus. Its subcellular location is the nucleus speckle. It localises to the cytoplasm. The protein resides in the cell membrane. It is found in the cytoskeleton. The protein localises to the microtubule organizing center. Its subcellular location is the centrosome. Its function is as follows. Transcription factor that binds the cAMP response element (CRE) (consensus: 5'-GTGACGT[AC][AG]-3') and displays two biological functions, as regulator of metabolic and redox processes under normal cellular conditions, and as master transcription factor during integrated stress response (ISR). Binds to asymmetric CRE's as a heterodimer and to palindromic CRE's as a homodimer. Core effector of the ISR, which is required for adaptation to various stress such as endoplasmic reticulum (ER) stress, amino acid starvation, mitochondrial stress or oxidative stress. During ISR, ATF4 translation is induced via an alternative ribosome translation re-initiation mechanism in response to EIF2S1/eIF-2-alpha phosphorylation, and stress-induced ATF4 acts as a master transcription factor of stress-responsive genes in order to promote cell recovery. Promotes the transcription of genes linked to amino acid sufficiency and resistance to oxidative stress to protect cells against metabolic consequences of ER oxidation. Activates the transcription of NLRP1, possibly in concert with other factors in response to ER stress. Activates the transcription of asparagine synthetase (ASNS) in response to amino acid deprivation or ER stress. However, when associated with DDIT3/CHOP, the transcriptional activation of the ASNS gene is inhibited in response to amino acid deprivation. Together with DDIT3/CHOP, mediates programmed cell death by promoting the expression of genes involved in cellular amino acid metabolic processes, mRNA translation and the terminal unfolded protein response (terminal UPR), a cellular response that elicits programmed cell death when ER stress is prolonged and unresolved. Activates the expression of COX7A2L/SCAF1 downstream of the EIF2AK3/PERK-mediated unfolded protein response, thereby promoting formation of respiratory chain supercomplexes and increasing mitochondrial oxidative phosphorylation. Together with DDIT3/CHOP, activates the transcription of the IRS-regulator TRIB3 and promotes ER stress-induced neuronal cell death by regulating the expression of BBC3/PUMA in response to ER stress. May cooperate with the UPR transcriptional regulator QRICH1 to regulate ER protein homeostasis which is critical for cell viability in response to ER stress. In the absence of stress, ATF4 translation is at low levels and it is required for normal metabolic processes such as embryonic lens formation, fetal liver hematopoiesis, bone development and synaptic plasticity. Acts as a regulator of osteoblast differentiation in response to phosphorylation by RPS6KA3/RSK2: phosphorylation in osteoblasts enhances transactivation activity and promotes expression of osteoblast-specific genes and post-transcriptionally regulates the synthesis of Type I collagen, the main constituent of the bone matrix. Cooperates with FOXO1 in osteoblasts to regulate glucose homeostasis through suppression of beta-cell production and decrease in insulin production. Activates transcription of SIRT4. Regulates the circadian expression of the core clock component PER2 and the serotonin transporter SLC6A4. Binds in a circadian time-dependent manner to the cAMP response elements (CRE) in the SLC6A4 and PER2 promoters and periodically activates the transcription of these genes. Mainly acts as a transcriptional activator in cellular stress adaptation, but it can also act as a transcriptional repressor: acts as a regulator of synaptic plasticity by repressing transcription, thereby inhibiting induction and maintenance of long-term memory. Regulates synaptic functions via interaction with DISC1 in neurons, which inhibits ATF4 transcription factor activity by disrupting ATF4 dimerization and DNA-binding. This chain is Cyclic AMP-dependent transcription factor ATF-4, found in Mus musculus (Mouse).